The chain runs to 480 residues: Flap endonuclease 1 (480 aa).

The interval 1–106 (MGIKGLTKFI…SELEKRGEKR (106 aa)) is N-domain. Mg(2+) is bound at residue aspartate 34. 2 residues coordinate DNA: arginine 47 and arginine 72. Mg(2+) contacts are provided by aspartate 88, glutamate 160, glutamate 162, aspartate 181, and aspartate 183. The interval 124-266 (EIKKQSGRTV…KTAYNLIKEY (143 aa)) is I-domain. Glutamate 160 serves as a coordination point for DNA. Positions 244 and 246 each coordinate DNA. Aspartate 246 is a Mg(2+) binding site. The interval 349–357 (TQRRLDTFF) is interaction with PCNA. The disordered stretch occupies residues 379-461 (TKGKGKKREI…NIKNENVKED (83 aa)). Basic and acidic residues predominate over residues 404 to 428 (NVKDEKKNNEKVDELKNKSDENLVK). Residues 429–438 (DEEDDQDDYD) show a composition bias toward acidic residues.

Belongs to the XPG/RAD2 endonuclease family. FEN1 subfamily. As to quaternary structure, interacts with PCNA. Three molecules of FEN1 bind to one PCNA trimer with each molecule binding to one PCNA monomer. PCNA stimulates the nuclease activity without altering cleavage specificity. Mg(2+) is required as a cofactor. Phosphorylated. Phosphorylation upon DNA damage induces relocalization to the nuclear plasma.

The protein resides in the nucleus. The protein localises to the nucleolus. It is found in the nucleoplasm. Its subcellular location is the mitochondrion. With respect to regulation, inhibited by monovalent metal ions. In terms of biological role, structure-specific nuclease with 5'-flap endonuclease and 5'-3' exonuclease activities involved in DNA replication and repair. During DNA replication, cleaves the 5'-overhanging flap structure that is generated by displacement synthesis when DNA polymerase encounters the 5'-end of a downstream Okazaki fragment. It enters the flap from the 5'-end and then tracks to cleave the flap base, leaving a nick for ligation. Also involved in the long patch base excision repair (LP-BER) pathway, by cleaving within the apurinic/apyrimidinic (AP) site-terminated flap. Acts as a genome stabilization factor that prevents flaps from equilibrating into structures that lead to duplications and deletions. Also possesses 5'-3' exonuclease activity on nicked or gapped double-stranded DNA, and exhibits RNase H activity. Also involved in replication and repair of rDNA and in repairing mitochondrial DNA. The polypeptide is Flap endonuclease 1 (Plasmodium yoelii yoelii).